The following is a 343-amino-acid chain: TATA box-binding protein-like 2 (343 aa).

Positions 71 to 152 (PDEVTQENKD…SDSLSLASIT (82 aa)) are disordered. Residues 76–90 (QENKDQPVISKHETE) show a composition bias toward basic and acidic residues. The segment covering 94 to 127 (ESQSPQSRLPSPSEQDVGLGLNSSSLSNSHSQLH) has biased composition (low complexity). The span at 143–152 (SDSLSLASIT) shows a compositional bias: polar residues.

The protein belongs to the TBP family. In terms of assembly, interacts with TAF3. Ubiquitously expressed in all tissues examined with highest levels in heart, lung, ovary, spleen and testes.

It localises to the cytoplasm. The protein localises to the nucleus. In terms of biological role, transcription factor required in complex with TAF3 for the differentiation of myoblasts into myocytes. The complex replaces TFIID at specific promoters at an early stage in the differentiation process. This chain is TATA box-binding protein-like 2, found in Homo sapiens (Human).